Consider the following 84-residue polypeptide: MPLARDLLHPSLDEEKKKHKKKRLVQSPNSYFMDVKCPGCYKITTVFSHAQTVVLCVGCSTVLCQPTGGKARLTEGCSFRRKQH.

The segment covering 1–16 (MPLARDLLHPSLDEEK) has biased composition (basic and acidic residues). A disordered region spans residues 1-23 (MPLARDLLHPSLDEEKKKHKKKR). A C4-type zinc finger spans residues 38 to 60 (PGCYKITTVFSHAQTVVLCVGCS).

The protein belongs to the eukaryotic ribosomal protein eS27 family. The cofactor is Zn(2+).

The polypeptide is Small ribosomal subunit protein eS27-like (RPS27L) (Bos taurus (Bovine)).